A 608-amino-acid polypeptide reads, in one-letter code: 65-kDa microtubule-associated protein 6 (608 aa).

3 coiled-coil regions span residues 164-186, 368-388, and 467-503; these read DLTLRNLNEYQTHLRTLQKEKSD, ELLANIEMQINKIKDEAQSRK, and VRLVNILEDYKLTRKQQEEEKKRYRDQKKRQDLLLTQ. Residues 501–565 form a disordered region; it reads LTQRESIYGS…RSYSGHHRQN (65 aa). Residues 510–523 show a composition bias toward low complexity; the sequence is SKPSPRRSSSFRKP. At serine 513 the chain carries Phosphoserine. Over residues 526–535 the composition is skewed to polar residues; it reads FNISNGNGSV. The residue at position 604 (serine 604) is a Phosphoserine.

Belongs to the MAP65/ASE1 family. Forms a dimer. Binds to polymerized centrally located endocytic MT.

It is found in the nucleus. Its subcellular location is the cytoplasm. It localises to the mitochondrion. The protein localises to the cytoskeleton. The protein resides in the phragmoplast. Functionally, microtubule-associated protein that mediates the formation of a mesh-like stable and dense network formed by individual microtubules (MT). Confers MT resistance to high concentration of NaCl. The sequence is that of 65-kDa microtubule-associated protein 6 (MAP65-6) from Arabidopsis thaliana (Mouse-ear cress).